We begin with the raw amino-acid sequence, 87 residues long: MAHKKAGGSTRNGRDSIGKRLGVKLFGGQKAYPGNIIVRQRGTKFHPGKNVGCGKDYSLYALKSGIVFFKKKKNKKFINIIPKILCK.

This sequence belongs to the bacterial ribosomal protein bL27 family.

The protein is Large ribosomal subunit protein bL27 of Wigglesworthia glossinidia brevipalpis.